Consider the following 148-residue polypeptide: Large ribosomal subunit protein uL15 (148 aa).

A disordered region spans residues 1–51; the sequence is MNLSSLKPAEGAVKSRKRIGRGPGSGLGGTSTRGHKGAKSRSGYSKKIGFE. The span at 21–31 shows a compositional bias: gly residues; that stretch reads RGPGSGLGGTS.

It belongs to the universal ribosomal protein uL15 family. Part of the 50S ribosomal subunit.

Binds to the 23S rRNA. The protein is Large ribosomal subunit protein uL15 of Porphyromonas gingivalis (strain ATCC BAA-308 / W83).